The chain runs to 324 residues: Acetyl-coenzyme A carboxylase carboxyl transferase subunit alpha (324 aa).

The 255-residue stretch at 37–291 (KLEKRLDKLK…REFIIQEWLR (255 aa)) folds into the CoA carboxyltransferase C-terminal domain.

This sequence belongs to the AccA family. As to quaternary structure, acetyl-CoA carboxylase is a heterohexamer composed of biotin carboxyl carrier protein (AccB), biotin carboxylase (AccC) and two subunits each of ACCase subunit alpha (AccA) and ACCase subunit beta (AccD).

It localises to the cytoplasm. It carries out the reaction N(6)-carboxybiotinyl-L-lysyl-[protein] + acetyl-CoA = N(6)-biotinyl-L-lysyl-[protein] + malonyl-CoA. It functions in the pathway lipid metabolism; malonyl-CoA biosynthesis; malonyl-CoA from acetyl-CoA: step 1/1. Its function is as follows. Component of the acetyl coenzyme A carboxylase (ACC) complex. First, biotin carboxylase catalyzes the carboxylation of biotin on its carrier protein (BCCP) and then the CO(2) group is transferred by the carboxyltransferase to acetyl-CoA to form malonyl-CoA. This is Acetyl-coenzyme A carboxylase carboxyl transferase subunit alpha from Chlamydia pneumoniae (Chlamydophila pneumoniae).